The following is a 472-amino-acid chain: Flotillin-like protein 6 (472 aa).

A lipid anchor (S-palmitoyl cysteine) is attached at C37. The stretch at 237 to 327 forms a coiled coil; sequence ENQREAEVAQ…ELYKKQKEAE (91 aa).

It belongs to the band 7/mec-2 family. Flotillin subfamily. May be palmitoylated. As to expression, very low occasional expression in roots and nodules.

The protein resides in the cell membrane. It localises to the membrane. It is found in the caveola. In terms of biological role, may act as a scaffolding protein within caveolar membranes, functionally participating in formation of caveolae or caveolae-like vesicles. May be involved in nodule formation. This chain is Flotillin-like protein 6 (FLOT6), found in Medicago truncatula (Barrel medic).